A 465-amino-acid chain; its full sequence is 23S rRNA (uracil(1939)-C(5))-methyltransferase RlmD (465 aa).

Residues 1–22 (MSEAVPTSARKSRNAPVAPGPA) form a disordered region. The region spanning 16–80 (PVAPGPAPVL…PSYEQATVVD (65 aa)) is the TRAM domain. The [4Fe-4S] cluster site is built by Cys93, Cys99, Cys102, and Cys181. 6 residues coordinate S-adenosyl-L-methionine: Gln289, Phe318, Asn323, Glu339, Asn367, and Asp388. The active-site Nucleophile is Cys421.

The protein belongs to the class I-like SAM-binding methyltransferase superfamily. RNA M5U methyltransferase family. RlmD subfamily.

It catalyses the reaction uridine(1939) in 23S rRNA + S-adenosyl-L-methionine = 5-methyluridine(1939) in 23S rRNA + S-adenosyl-L-homocysteine + H(+). Its function is as follows. Catalyzes the formation of 5-methyl-uridine at position 1939 (m5U1939) in 23S rRNA. In Burkholderia lata (strain ATCC 17760 / DSM 23089 / LMG 22485 / NCIMB 9086 / R18194 / 383), this protein is 23S rRNA (uracil(1939)-C(5))-methyltransferase RlmD.